A 277-amino-acid polypeptide reads, in one-letter code: Glutamate racemase (277 aa).

Substrate is bound by residues 16 to 17 (DS) and 48 to 49 (YG). The active-site Proton donor/acceptor is Cys-79. 80-81 (NT) is a binding site for substrate. Catalysis depends on Cys-191, which acts as the Proton donor/acceptor. 192–193 (TH) lines the substrate pocket.

This sequence belongs to the aspartate/glutamate racemases family.

The catalysed reaction is L-glutamate = D-glutamate. It functions in the pathway cell wall biogenesis; peptidoglycan biosynthesis. In terms of biological role, provides the (R)-glutamate required for cell wall biosynthesis. The protein is Glutamate racemase of Symbiobacterium thermophilum (strain DSM 24528 / JCM 14929 / IAM 14863 / T).